The following is a 553-amino-acid chain: Phospholipase-B 81 (553 aa).

Residues 1–35 (MVRFGSAASSDNRRRRCWSWYWGGLLLLWAVAETR) form the signal peptide. 4 N-linked (GlcNAc...) asparagine glycosylation sites follow: asparagine 69, asparagine 313, asparagine 416, and asparagine 531.

It belongs to the phospholipase B-like family. As to expression, expressed by the venom gland.

It localises to the secreted. Functionally, may cause hemolysis. In Drysdalia coronoides (White-lipped snake), this protein is Phospholipase-B 81.